A 606-amino-acid polypeptide reads, in one-letter code: MAIKQLSETLINQIAAGEVIERPSSATKELVENAIDAGATRIEIATAGGGKGLVRITDNGSGMSPADLELAVRRHCTSKISTTLDDIRTLGFRGEALPSIGSVAKLTITSRQQGAEQGSVISVTGGKVSDVRPAASNAGTIVEVRDLFFATPARLKFLKTERAEAAAITEVVKRMAIAFPHIRFVLSGTDRSTLEIPSTGDDHLARMAQILGAEFKDNAIEIDAGREDVTLTGFAGVPTFNRGNSSHQYVFVNGRPVQDKLLLSAIRGAYAETVPHGRYPVAVLSITLDPAFVDVNVHPAKSDVRFRDPGLIRGLIVGAIRQALTRDGDRAATTGASQMMNAFRPGYSPSGLRPSPSATWSAATSPSRPLAVSGDMQFAEAAQSRFSDITMPTARAEPREAYEASQSPSPEPVLYPLGAARAQLHENYIIAQTENGLVIVDQHAAHERLVFEEMRNALHSRRPPSQVLLIPEIIDLPEEDCDRLMDHAAGFDALGLVIERFGPGAIAVRETPAMLGEVNVQGLVRQLADEIAEWDAASTLANKLEYVAATMACHGSVRSGRRMRPEEMNALLRQMENTPGSGQCNHGRPTYIELKLSDIERLFGRS.

Positions 340–366 are disordered; that stretch reads MNAFRPGYSPSGLRPSPSATWSAATSP. Residues 353–366 are compositionally biased toward low complexity; the sequence is RPSPSATWSAATSP.

It belongs to the DNA mismatch repair MutL/HexB family.

Functionally, this protein is involved in the repair of mismatches in DNA. It is required for dam-dependent methyl-directed DNA mismatch repair. May act as a 'molecular matchmaker', a protein that promotes the formation of a stable complex between two or more DNA-binding proteins in an ATP-dependent manner without itself being part of a final effector complex. The sequence is that of DNA mismatch repair protein MutL from Agrobacterium fabrum (strain C58 / ATCC 33970) (Agrobacterium tumefaciens (strain C58)).